The primary structure comprises 669 residues: Beta-galactosidase (669 aa).

The N-terminal stretch at 1–24 (MDFPGAARLLSLLLVPLLLGPARG) is a signal peptide. A propeptide spanning residues 25–29 (LRNAS) is cleaved from the precursor. N27 is a glycosylation site (N-linked (GlcNAc...) asparagine). Y84, E130, and N188 together coordinate substrate. The active-site Proton donor is the E189. Residues C196 and C231 are joined by a disulfide bond. N248 is a glycosylation site (N-linked (GlcNAc...) asparagine). The active-site Nucleophile is E269. Y334 contributes to the substrate binding site. 4 N-linked (GlcNAc...) asparagine glycosylation sites follow: N465, N499, N547, and N557. A disulfide bond links C628 and C636. A disordered region spans residues 649-669 (TPTSSHPLPDLSDRDSGWDRV). Positions 659–669 (LSDRDSGWDRV) are enriched in basic and acidic residues.

Belongs to the glycosyl hydrolase 35 family. Homodimer. May form higher multimers.

The protein localises to the lysosome. It catalyses the reaction Hydrolysis of terminal non-reducing beta-D-galactose residues in beta-D-galactosides.. Functionally, cleaves beta-linked terminal galactosyl residues from gangliosides, glycoproteins, and glycosaminoglycans. This chain is Beta-galactosidase (GLB1), found in Felis catus (Cat).